We begin with the raw amino-acid sequence, 803 residues long: Translation initiation factor IF-2 (803 aa).

Positions 65–75 (PDKVEEKKEHT) are enriched in basic and acidic residues. Residues 65–186 (PDKVEEKKEH…PKSRKSKTLK (122 aa)) are disordered. Residues 175 to 185 (NKPKSRKSKTL) show a composition bias toward basic residues. A tr-type G domain is found at 300–468 (IRPPVVTIMG…ILLTADAALE (169 aa)). The interval 309-316 (GHVDHGKT) is G1. 309 to 316 (GHVDHGKT) provides a ligand contact to GTP. The tract at residues 334-338 (GITQH) is G2. The interval 355–358 (DTPG) is G3. GTP-binding positions include 355–359 (DTPGH) and 409–412 (NKID). Residues 409 to 412 (NKID) are G4. The interval 445-447 (SAK) is G5.

This sequence belongs to the TRAFAC class translation factor GTPase superfamily. Classic translation factor GTPase family. IF-2 subfamily.

It is found in the cytoplasm. Functionally, one of the essential components for the initiation of protein synthesis. Protects formylmethionyl-tRNA from spontaneous hydrolysis and promotes its binding to the 30S ribosomal subunits. Also involved in the hydrolysis of GTP during the formation of the 70S ribosomal complex. The sequence is that of Translation initiation factor IF-2 from Tropheryma whipplei (strain TW08/27) (Whipple's bacillus).